The sequence spans 130 residues: YopE regulator (130 aa).

Functionally, positive regulator of YopE. The polypeptide is YopE regulator (yerA) (Yersinia pestis).